Consider the following 240-residue polypeptide: 4-hydroxy-tetrahydrodipicolinate reductase (240 aa).

NAD(+)-binding positions include 79–81 (ATT) and 103–106 (SANM). Residue H135 is the Proton donor/acceptor of the active site. H136 serves as a coordination point for (S)-2,3,4,5-tetrahydrodipicolinate. The Proton donor role is filled by K139. 145–146 (GT) contacts (S)-2,3,4,5-tetrahydrodipicolinate.

It belongs to the DapB family.

It localises to the cytoplasm. The enzyme catalyses (S)-2,3,4,5-tetrahydrodipicolinate + NAD(+) + H2O = (2S,4S)-4-hydroxy-2,3,4,5-tetrahydrodipicolinate + NADH + H(+). It carries out the reaction (S)-2,3,4,5-tetrahydrodipicolinate + NADP(+) + H2O = (2S,4S)-4-hydroxy-2,3,4,5-tetrahydrodipicolinate + NADPH + H(+). It functions in the pathway amino-acid biosynthesis; L-lysine biosynthesis via DAP pathway; (S)-tetrahydrodipicolinate from L-aspartate: step 4/4. Functionally, catalyzes the conversion of 4-hydroxy-tetrahydrodipicolinate (HTPA) to tetrahydrodipicolinate. The chain is 4-hydroxy-tetrahydrodipicolinate reductase from Staphylococcus aureus (strain USA300).